Here is an 831-residue protein sequence, read N- to C-terminus: Periplasmic nitrate reductase (831 aa).

Positions 1–29 (MKFTRREFMKAQAAASAAAVAGIALPATA) form a signal peptide, tat-type signal. Residues 41–97 (IKWEKAPCRFCGTGCSVLVGTQHGRVVATQGDPESPVNKGLNCVKGYFLSKIMYGKD) enclose the 4Fe-4S Mo/W bis-MGD-type domain. 4 residues coordinate [4Fe-4S] cluster: Cys48, Cys51, Cys55, and Cys83. Mo-bis(molybdopterin guanine dinucleotide) contacts are provided by residues Lys85, Gln152, Asn177, Cys181, 214 to 221 (WGSNMAEM), 245 to 249 (STYTH), 264 to 266 (QSD), Met374, Gln378, Asn484, 510 to 511 (SD), Lys533, Asp560, and 720 to 729 (TGRVLEHWHS). A substrate-binding site is contributed by Trp796. The Mo-bis(molybdopterin guanine dinucleotide) site is built by Asn804 and Lys821.

The protein belongs to the prokaryotic molybdopterin-containing oxidoreductase family. NasA/NapA/NarB subfamily. As to quaternary structure, component of the periplasmic nitrate reductase NapAB complex composed of NapA and NapB. The cofactor is [4Fe-4S] cluster. It depends on Mo-bis(molybdopterin guanine dinucleotide) as a cofactor. Post-translationally, predicted to be exported by the Tat system. The position of the signal peptide cleavage has not been experimentally proven.

It is found in the periplasm. It carries out the reaction 2 Fe(II)-[cytochrome] + nitrate + 2 H(+) = 2 Fe(III)-[cytochrome] + nitrite + H2O. Functionally, catalytic subunit of the periplasmic nitrate reductase complex NapAB. Receives electrons from NapB and catalyzes the reduction of nitrate to nitrite. The polypeptide is Periplasmic nitrate reductase (Psychromonas ingrahamii (strain DSM 17664 / CCUG 51855 / 37)).